Consider the following 70-residue polypeptide: MKSGIHPEYVTTQVNCGCGNSFTTRSTRTSGQITVEICSNCHPFYTGKQKILDTGGRVARFEARYGRRKK.

The Zn(2+) site is built by cysteine 16, cysteine 18, cysteine 38, and cysteine 41.

It belongs to the bacterial ribosomal protein bL31 family. Type A subfamily. Part of the 50S ribosomal subunit. Zn(2+) is required as a cofactor.

In terms of biological role, binds the 23S rRNA. This Saccharopolyspora erythraea (strain ATCC 11635 / DSM 40517 / JCM 4748 / NBRC 13426 / NCIMB 8594 / NRRL 2338) protein is Large ribosomal subunit protein bL31.